A 114-amino-acid chain; its full sequence is Pole-localizer protein TmaR (114 aa).

Positions 70 to 111 (RDDYESRVDDYTIRNAELSKQRREASTKMKEQKKAHAELLKN) form a coiled coil. The segment at 89-114 (KQRREASTKMKEQKKAHAELLKNAEK) is disordered.

Belongs to the pole-localizer TmaR family.

It is found in the cytoplasm. Pole-localizer protein involved in the regulation of several cellular processes. The polypeptide is Pole-localizer protein TmaR (Haemophilus influenzae (strain PittEE)).